Here is a 284-residue protein sequence, read N- to C-terminus: uncharacterized protein (284 aa).

An N-terminal signal peptide occupies residues 1–23 (MKRGCAIAVMICGLITSVSAASA).

This sequence belongs to the surface antigen msp4 family.

This is an uncharacterized protein from Brucella suis biovar 1 (strain 1330).